The following is a 340-amino-acid chain: uncharacterized protein (340 aa).

The RING-CH-type zinc finger occupies 6-70; that stretch reads KYEKSSARCW…PQCLTAYRIA (65 aa). Zn(2+)-binding residues include Cys14, Cys17, Cys37, Cys39, His44, Cys47, Cys60, and Cys63. Helical transmembrane passes span 249–269, 274–294, and 300–320; these read EFWI…TKIL, PILL…GNFT, and IIGA…FIAW.

Its subcellular location is the membrane. This is an uncharacterized protein from Schizosaccharomyces pombe (strain 972 / ATCC 24843) (Fission yeast).